A 279-amino-acid polypeptide reads, in one-letter code: Serine protease 29 (279 aa).

Residues 1–17 form the signal peptide; that stretch reads MLIQLCLTLFFLGCSIA. The region spanning 31–276 is the Peptidase S1 domain; that stretch reads IVGGHSAPQG…FLPWITQQMQ (246 aa). Cys-62 and Cys-78 are oxidised to a cystine. Residues His-77 and Asp-124 each act as charge relay system in the active site. Intrachain disulfides connect Cys-158/Cys-234, Cys-191/Cys-215, and Cys-224/Cys-252. An N-linked (GlcNAc...) asparagine glycan is attached at Asn-197. Ser-228 (charge relay system) is an active-site residue. Asn-235 carries an N-linked (GlcNAc...) asparagine glycan.

This sequence belongs to the peptidase S1 family. In terms of assembly, homooligomer, heterodimer and heterotetramer. Able to form homo- and hetero- tetrameric structures. Heterotetramer is far more stable than the homotetramer. In terms of tissue distribution, expressed in embryos and placenta. Found in uterus especially in glandular epithelium during zona lysis and implantation.

It localises to the secreted. In terms of biological role, involved in embryo hatching and implantation. The polypeptide is Serine protease 29 (Prss29) (Mus musculus (Mouse)).